Reading from the N-terminus, the 106-residue chain is Thioredoxin (106 aa).

One can recognise a Thioredoxin domain in the interval 1-106 (GATVKVTNAT…RLAAFLDASL (106 aa)). Cysteine 31 and cysteine 34 are oxidised to a cystine.

The protein belongs to the thioredoxin family.

Participates in various redox reactions through the reversible oxidation of its active center dithiol to a disulfide and catalyzes dithiol-disulfide exchange reactions. This is Thioredoxin (trxA) from Kitasatospora aureofaciens (Streptomyces aureofaciens).